Reading from the N-terminus, the 202-residue chain is Snake venom metalloproteinase leucurolysin-A (202 aa).

Pyrrolidone carboxylic acid is present on glutamine 1. Residues 6–202 (RYIELVVVAD…HNPQCILNKP (197 aa)) form the Peptidase M12B domain. The Ca(2+) site is built by glutamate 9 and aspartate 93. 3 disulfide bridges follow: cysteine 117-cysteine 197, cysteine 157-cysteine 181, and cysteine 159-cysteine 164. Histidine 142 lines the Zn(2+) pocket. Residue glutamate 143 is part of the active site. The Zn(2+) site is built by histidine 146 and histidine 152. Ca(2+) is bound by residues cysteine 197 and asparagine 200.

The protein belongs to the venom metalloproteinase (M12B) family. P-I subfamily. Monomer. It depends on Zn(2+) as a cofactor. As to expression, expressed by the venom gland.

It localises to the secreted. Inhibited by EDTA and 2-mercaptoethanol. Inhibited by 1 mM zinc ion and to a lesser extent by 1 mM calcium ion. Its function is as follows. Non-hemorrhagic metalloproteinase that hydrolyzes the alpha chains of fibrinogen, as well as fibrin, fibronectin and casein. Beta and gamma chains are also hydrolyzed, but more slowly. Thrombolytic activity is also observed. Induces detachment of endothelial cells followed by death, and inhibits endothelial cell adhesion to fibronectin. Induces edema in mouse paw. Inhibits ADP-induced platelet aggregation on human platelet-rich plasma with an IC(50) of 2.8 uM. The polypeptide is Snake venom metalloproteinase leucurolysin-A (Bothrops leucurus (Whitetail lancehead)).